Here is a 242-residue protein sequence, read N- to C-terminus: UPF0173 metal-dependent hydrolase Rxyl_1261 (242 aa).

It belongs to the UPF0173 family.

In Rubrobacter xylanophilus (strain DSM 9941 / JCM 11954 / NBRC 16129 / PRD-1), this protein is UPF0173 metal-dependent hydrolase Rxyl_1261.